A 313-amino-acid chain; its full sequence is Cilia- and flagella-associated protein 36 (313 aa).

Residues Ser85 and Ser147 each carry the phosphoserine modification. Residues 147–187 (SDLEQEEMKILKEVLRKSKEEYDQEEERKRKKQLSEAKTEE) are a coiled coil. Disordered regions lie at residues 165-204 (KEEY…SQGD) and 262-292 (KIKQ…TAEE). Positions 179 to 189 (QLSEAKTEEHP) are enriched in basic and acidic residues. Polar residues predominate over residues 192-203 (ANETAKMSNSQG). Residue Ser201 is modified to Phosphoserine. A compositionally biased stretch (basic and acidic residues) spans 271–292 (QKGKPAGEVEEMTEKPEMTAEE).

This sequence belongs to the CFAP36 family. In terms of assembly, interacts with ARL3.

The protein resides in the nucleus. It localises to the cytoplasm. The protein localises to the cell projection. Its subcellular location is the cilium. It is found in the flagellum. May act as an effector for ARL3. The chain is Cilia- and flagella-associated protein 36 from Bos taurus (Bovine).